We begin with the raw amino-acid sequence, 653 residues long: E3 ubiquitin-protein ligase TRIM32 (653 aa).

Position 2 is an N-acetylalanine (A2). The segment at 20–65 (CPICMESFTEEQLRPKLLHCGHTICRQCLEKLLASSINGVRCPFCS) adopts an RING-type zinc-finger fold. S55 is subject to Phosphoserine; by CHEK2. The Zn(2+) site is built by C100, C103, C123, and H128. The segment at 103–133 (CGRRLPRQFCRSCGLVLCEPCREADHQPPGH) adopts a B box-type zinc-finger fold. Positions 138-197 (VKEAAEERRRDFGEKLTRLRELMGELQRRKAALEGVSKDLQARYKAVLQEYGHEERRVQD) form a coiled coil. S328, S335, and S339 each carry phosphoserine. 5 NHL repeats span residues 358-401 (LKKM…FTRK), 415-458 (DSFV…YTLD), 459-499 (GHCV…FTVD), 562-605 (GRQI…FPKG), and 606-646 (GGYS…YSYH).

This sequence belongs to the TRIM/RBCC family. In terms of assembly, it self-associates. Interacts with DTNBP1. Interacts with PIAS4/PIASY upon treatment with UVB and TNF-alpha. Interacts with AMBRA1; promoting activation of ULK1 through unanchored 'Lys-63'-linked polyubiquitin chains. Interacts with TICAM1 and TAX1BP1; these interactions target TICAM1 to TAX1BP1-mediated selective autophagic degradation. As to quaternary structure, (Microbial infection) Interacts with S.typhimurium protein SseK3; SseK3 does not glycosylate TRIM32. Post-translationally, ubiquitinated. Phosphorylation at Ser-55 by CHEK2 under oxidative stress, activates the E3 ligase activity and promotes ATG7 ubiquitination leading to positive regulation of the autophagosme assembly. As to expression, spleen, thymus, prostate, testis, ovary, intestine, colon and skeletal muscle.

The protein localises to the cytoplasm. The protein resides in the mitochondrion. It localises to the endoplasmic reticulum. It catalyses the reaction S-ubiquitinyl-[E2 ubiquitin-conjugating enzyme]-L-cysteine + [acceptor protein]-L-lysine = [E2 ubiquitin-conjugating enzyme]-L-cysteine + N(6)-ubiquitinyl-[acceptor protein]-L-lysine.. It functions in the pathway protein modification; protein ubiquitination. E3 ubiquitin ligase that plays a role in various biological processes including neural stem cell differentiation, innate immunity, inflammatory resonse and autophagy. Plays a role in virus-triggered induction of IFN-beta and TNF-alpha by mediating the ubiquitination of STING1. Mechanistically, targets STING1 for 'Lys-63'-linked ubiquitination which promotes the interaction of STING1 with TBK1. Regulates bacterial clearance and promotes autophagy in Mycobacterium tuberculosis-infected macrophages. Negatively regulates TLR3/4-mediated innate immune and inflammatory response by triggering the autophagic degradation of TICAM1 in an E3 activity-independent manner. Plays an essential role in oxidative stress induced cell death by inducing loss of transmembrane potential and enhancing mitochondrial reactive oxygen species (ROS) production during oxidative stress conditions. Ubiquitinates XIAP and targets it for proteasomal degradation. Ubiquitinates DTNBP1 (dysbindin) and promotes its degradation. May ubiquitinate BBS2. Ubiquitinates PIAS4/PIASY and promotes its degradation in keratinocytes treated with UVB and TNF-alpha. Also acts as a regulator of autophagy by mediating formation of unanchored 'Lys-63'-linked polyubiquitin chains that activate ULK1: interaction with AMBRA1 is required for ULK1 activation. Positively regulates dendritic branching by promoting ubiquitination and subsequent degradation of the epigenetic factor CDYL. Under metabolic stress and phosphorylation by CHK2, mediates 'Lys-63'-linked ubiquitination of ATG7 at 'Lys-45' to initiate autophagy. In terms of biological role, (Microbial infection) May play a significant role in mediating the biological activity of the HIV-1 Tat protein in vivo. Binds specifically to the activation domain of HIV-1 Tat and can also interact with the HIV-2 and EIAV Tat proteins in vivo. This is E3 ubiquitin-protein ligase TRIM32 from Homo sapiens (Human).